We begin with the raw amino-acid sequence, 178 residues long: Large ribosomal subunit protein bL25 (178 aa).

The protein belongs to the bacterial ribosomal protein bL25 family. CTC subfamily. In terms of assembly, part of the 50S ribosomal subunit; part of the 5S rRNA/L5/L18/L25 subcomplex. Contacts the 5S rRNA. Binds to the 5S rRNA independently of L5 and L18.

Its function is as follows. This is one of the proteins that binds to the 5S RNA in the ribosome where it forms part of the central protuberance. The polypeptide is Large ribosomal subunit protein bL25 (Helicobacter pylori (strain G27)).